The following is a 258-amino-acid chain: Acetylglutamate kinase (258 aa).

Substrate-binding positions include 41–42 (GG), Arg-63, and Asn-156.

Belongs to the acetylglutamate kinase family. ArgB subfamily. Homodimer.

The protein localises to the cytoplasm. The enzyme catalyses N-acetyl-L-glutamate + ATP = N-acetyl-L-glutamyl 5-phosphate + ADP. The protein operates within amino-acid biosynthesis; L-arginine biosynthesis; N(2)-acetyl-L-ornithine from L-glutamate: step 2/4. Functionally, catalyzes the ATP-dependent phosphorylation of N-acetyl-L-glutamate. This is Acetylglutamate kinase from Geobacillus stearothermophilus (Bacillus stearothermophilus).